The primary structure comprises 280 residues: Large ribosomal subunit protein uL2 (280 aa).

Disordered regions lie at residues 33–55 (LTEGLTKSGGRNNTGRITSRRRG) and 199–266 (DNSN…KASQ). The span at 209 to 219 (GRMRHKGKRPS) shows a compositional bias: basic residues.

This sequence belongs to the universal ribosomal protein uL2 family. As to quaternary structure, part of the 50S ribosomal subunit. Forms a bridge to the 30S subunit in the 70S ribosome.

Its function is as follows. One of the primary rRNA binding proteins. Required for association of the 30S and 50S subunits to form the 70S ribosome, for tRNA binding and peptide bond formation. It has been suggested to have peptidyltransferase activity; this is somewhat controversial. Makes several contacts with the 16S rRNA in the 70S ribosome. The sequence is that of Large ribosomal subunit protein uL2 from Ruegeria sp. (strain TM1040) (Silicibacter sp.).